The following is a 1259-amino-acid chain: Protein retinal degeneration B (1259 aa).

Residues 268–378 (GGGEECSDDS…SKGALHSPVG (111 aa)) are disordered. Residues Ser274 and Ser277 each carry the phosphoserine modification. Residues 284–293 (STAATAASTT) show a composition bias toward low complexity. Residues 318–335 (SSDEEGEEEEDDDEDEND) show a composition bias toward acidic residues. The segment covering 347–363 (QGGSAQRSRSQSIQMAQ) has biased composition (low complexity). 3 positions are modified to phosphoserine: Ser401, Ser403, and Ser434. Disordered stretches follow at residues 427–454 (LLGE…GNSR), 472–500 (RGNK…STPS), and 660–692 (SQPG…NSRL). The segment covering 663-678 (GTASGASNSGGDAATN) has biased composition (low complexity). Residues 679 to 689 (INTHNPLSPRN) show a composition bias toward polar residues. The DDHD domain maps to 730 to 913 (LDFEVCDFFM…IAFILRQIGK (184 aa)).

The protein belongs to the PtdIns transfer protein family. PI transfer class IIA subfamily. As to expression, expressed in adult heads, not detected in bodies.

The enzyme catalyses a 1,2-diacyl-sn-glycero-3-phospho-(1D-myo-inositol)(in) = a 1,2-diacyl-sn-glycero-3-phospho-(1D-myo-inositol)(out). It catalyses the reaction a 1,2-diacyl-sn-glycero-3-phosphate(in) = a 1,2-diacyl-sn-glycero-3-phosphate(out). In terms of biological role, catalyzes the transfer of phosphatidylinositol (PI) and phosphatidic acid (PA) between membranes. May control phosphatidylinositol concentration in transport vesicles from the subrhabdomeric cisternae (SRC) to the rhabdomere. May function as a calcium transporter. The sequence is that of Protein retinal degeneration B (rdgB) from Drosophila melanogaster (Fruit fly).